The chain runs to 283 residues: Probable endonuclease 4 (283 aa).

Positions 67, 107, 144, 178, 181, 215, 228, 230, and 260 each coordinate Zn(2+).

This sequence belongs to the AP endonuclease 2 family. The cofactor is Zn(2+).

The catalysed reaction is Endonucleolytic cleavage to 5'-phosphooligonucleotide end-products.. Endonuclease IV plays a role in DNA repair. It cleaves phosphodiester bonds at apurinic or apyrimidinic (AP) sites, generating a 3'-hydroxyl group and a 5'-terminal sugar phosphate. In Citrifermentans bemidjiense (strain ATCC BAA-1014 / DSM 16622 / JCM 12645 / Bem) (Geobacter bemidjiensis), this protein is Probable endonuclease 4.